The sequence spans 209 residues: Methylthioribulose-1-phosphate dehydratase (209 aa).

Positions 98 and 100 each coordinate Zn(2+).

The protein belongs to the aldolase class II family. MtnB subfamily. As to quaternary structure, homotetramer. It depends on Zn(2+) as a cofactor.

The enzyme catalyses 5-(methylsulfanyl)-D-ribulose 1-phosphate = 5-methylsulfanyl-2,3-dioxopentyl phosphate + H2O. It functions in the pathway amino-acid biosynthesis; L-methionine biosynthesis via salvage pathway; L-methionine from S-methyl-5-thio-alpha-D-ribose 1-phosphate: step 2/6. In terms of biological role, catalyzes the dehydration of methylthioribulose-1-phosphate (MTRu-1-P) into 2,3-diketo-5-methylthiopentyl-1-phosphate (DK-MTP-1-P). In Bacillus subtilis (strain 168), this protein is Methylthioribulose-1-phosphate dehydratase (mtnB).